Consider the following 878-residue polypeptide: Aconitate hydratase A (878 aa).

[4Fe-4S] cluster-binding residues include C426, C492, and C495.

It belongs to the aconitase/IPM isomerase family. As to quaternary structure, monomer. Requires [4Fe-4S] cluster as cofactor.

It catalyses the reaction citrate = D-threo-isocitrate. The catalysed reaction is (2S,3R)-3-hydroxybutane-1,2,3-tricarboxylate = 2-methyl-cis-aconitate + H2O. Its pathway is carbohydrate metabolism; tricarboxylic acid cycle; isocitrate from oxaloacetate: step 2/2. It functions in the pathway organic acid metabolism; propanoate degradation. Involved in the catabolism of short chain fatty acids (SCFA) via the tricarboxylic acid (TCA)(acetyl degradation route) and probably the 2-methylcitrate cycle I (propionate degradation route). Catalyzes the reversible isomerization of citrate to isocitrate via cis-aconitate. Could catalyze the hydration of 2-methyl-cis-aconitate to yield (2R,3S)-2-methylisocitrate. The apo form of AcnA functions as a RNA-binding regulatory protein. The protein is Aconitate hydratase A (acnA) of Rickettsia typhi (strain ATCC VR-144 / Wilmington).